Consider the following 328-residue polypeptide: MSAAMLLAPGDVIKRSSEELKQRQIQINLTDWTEGETNKESKAERKEGDKAEELKDGEGRNRRAARRKRAAKETKDARCDRRIHTAVGSGSSAKGPGERANENVDRGDGKVGGGGGDADAGVGTTGANGGRWVVLTEEIRRAIESKYGTKIDVYRDEVPAQIIEVERSLQKELGISREGVAEQTERLRDLRRKEKSGAHAKAAERGRRKQGKKPHGDAQREGPEEEKTSEEPASVGITIEGVMSQKKLLSMIGGVERKMAPIGARESAVMLVSNSIKDVVRATAYFTAPTGDPHWKEVAAKLQKRRTIRYTSTGGDVKTEFLHLIDHL.

2 disordered regions span residues 31-128 (DWTE…TGAN) and 180-237 (VAEQ…SVGI). Basic and acidic residues-rich tracts occupy residues 36–61 (ETNKESKAERKEGDKAEELKDGEGRN), 71–83 (AKETKDARCDRRI), and 96–109 (PGERANENVDRGDG). K110 contacts ATP. The span at 110 to 128 (KVGGGGGDADAGVGTTGAN) shows a compositional bias: gly residues. Composition is skewed to basic and acidic residues over residues 180-205 (VAEQTERLRDLRRKEKSGAHAKAAER) and 214-230 (PHGDAQREGPEEEKTSE).

This sequence belongs to the orbivirus VP6 family. As to quaternary structure, homohexamer.

It is found in the virion. It catalyses the reaction ATP + H2O = ADP + phosphate + H(+). Functionally, ATP dependent RNA helicase essential for RNA packaging and viral transcription. Possesses ss- and dsRNA-binding capacity. This is Helicase VP6-A (Segment-9) from Bluetongue virus 1 (isolate South Africa) (BTV 1).